Here is a 158-residue protein sequence, read N- to C-terminus: Sorbin and SH3 domain-containing protein 2 (158 aa).

A SoHo domain is found at 1–46 (MRAATPLQTVDRPKDWYKTMFKQIHMVHKPDDDTDMYNTPYTYNAG). The segment at 28-158 (HKPDDDTDMY…TKPQAGRRKV (131 aa)) is disordered. Residues 50 to 66 (SPYSAQSHPAAKTQTYR) are compositionally biased toward polar residues. The segment covering 71–81 (SHSDNGTDAFK) has biased composition (basic and acidic residues). A Phosphoserine modification is found at S73. A compositionally biased stretch (pro residues) spans 86–99 (PVPPPHVPPPVPPL). Over residues 100–136 (RPRDRSSTEKHDWDPPDRKVDTRKFRSEPRSIFEYEP) the composition is skewed to basic and acidic residues. Alanine amide is present on A153.

Interacts with ABL1/c-Abl, ABL2/v-Abl/Arg, ACTN, AKT1, CBL, PALLD and PAK1. Interacts with ABL, CBL, DNM1, DNM2, FLOT1, AFDN, PTK2B/PYK2, SAPAP, SPTAN1, SYNJ1, SYNJ2, VCL/vinculin, and WASF. Interacts with PTPN12 and WASF1 via its SH3 domains; this interaction may mediate the partial PTPN12 and WASF1 translocation to focal adhesion sites. Post-translationally, ubiquitinated by CBL. In terms of processing, dephosphorylated by PTPN12. Expressed in duodenum.

Its subcellular location is the cytoplasm. The protein resides in the perinuclear region. It localises to the apical cell membrane. The protein localises to the cell junction. It is found in the focal adhesion. Its subcellular location is the cell projection. The protein resides in the lamellipodium. Its function is as follows. Adapter protein that plays a role in the assembling of signaling complexes, being a link between ABL kinases and actin cytoskeleton. Can form complex with ABL1 and CBL, thus promoting ubiquitination and degradation of ABL1 or with AKT1 and PAK1, thus mediating AKT1-mediated activation of PAK1. May play a role in the regulation of pancreatic cell adhesion, possibly by acting on WASF1 phosphorylation, enhancing phosphorylation by ABL1, as well as dephosphorylation by PTPN12. Increases water and sodium absorption in the intestine and gall-bladder. The sequence is that of Sorbin and SH3 domain-containing protein 2 (SORBS2) from Sus scrofa (Pig).